The sequence spans 1434 residues: Probable deoxyribonuclease RhsA (1434 aa).

Residues 14–42 form a disordered region; that stretch reads AMHAGNRPNPPDDRPQPCRGKPPTSPGKT. Helical transmembrane passes span 48–68 and 70–90; these read FLGA…VAAA and VFLV…LAVF. YD repeat units lie at residues 486–521, 592–628, and 847–876; these read YDAA…CADG, DDTG…LGRE, and YDAR…LTEV.

It belongs to the RHS/WapA nuclease family.

Its subcellular location is the membrane. In terms of biological role, toxic component of a toxin-immunity protein module, which functions as a cellular contact-dependent growth inhibition (CDI) system. This protein may be a nuclease that is specifically inhibited by its cognate immunity protein RhsAI. Upon expression of the C-terminus (residues 1284-1434) in E.coli growth is inhibited, cells elongate, nucleoids condense and plasmid DNA is degraded; these effects are blocked specifically by cognate immunity protein RshIA. Cell contact is necessary for growth inhibition. This is Probable deoxyribonuclease RhsA (rhsA) from Dickeya dadantii (strain 3937) (Erwinia chrysanthemi (strain 3937)).